The chain runs to 248 residues: 3-deoxy-manno-octulosonate cytidylyltransferase (248 aa).

Belongs to the KdsB family.

It localises to the cytoplasm. The enzyme catalyses 3-deoxy-alpha-D-manno-oct-2-ulosonate + CTP = CMP-3-deoxy-beta-D-manno-octulosonate + diphosphate. Its pathway is nucleotide-sugar biosynthesis; CMP-3-deoxy-D-manno-octulosonate biosynthesis; CMP-3-deoxy-D-manno-octulosonate from 3-deoxy-D-manno-octulosonate and CTP: step 1/1. It functions in the pathway bacterial outer membrane biogenesis; lipopolysaccharide biosynthesis. Functionally, activates KDO (a required 8-carbon sugar) for incorporation into bacterial lipopolysaccharide in Gram-negative bacteria. This is 3-deoxy-manno-octulosonate cytidylyltransferase from Klebsiella pneumoniae subsp. pneumoniae (strain ATCC 700721 / MGH 78578).